The following is a 378-amino-acid chain: Protein RecA (378 aa).

79–86 (GPESSGKT) lines the ATP pocket.

Belongs to the RecA family.

The protein localises to the cytoplasm. Its function is as follows. Can catalyze the hydrolysis of ATP in the presence of single-stranded DNA, the ATP-dependent uptake of single-stranded DNA by duplex DNA, and the ATP-dependent hybridization of homologous single-stranded DNAs. It interacts with LexA causing its activation and leading to its autocatalytic cleavage. In Streptococcus equi subsp. zooepidemicus (strain MGCS10565), this protein is Protein RecA.